The chain runs to 333 residues: Holliday junction branch migration complex subunit RuvB (333 aa).

The large ATPase domain (RuvB-L) stretch occupies residues 1–182 (MDERLLSGES…FGVLSRLEYY (182 aa)). ATP contacts are provided by residues leucine 21, arginine 22, glycine 63, lysine 66, threonine 67, threonine 68, 129 to 131 (EDF), arginine 172, tyrosine 182, and arginine 219. Threonine 67 serves as a coordination point for Mg(2+). The small ATPAse domain (RuvB-S) stretch occupies residues 183–253 (TVDQLSAIVE…ITQMALELLQ (71 aa)). Residues 256-333 (KLGLDHIDHK…QHFGMEMPKI (78 aa)) form a head domain (RuvB-H) region. Positions 311 and 316 each coordinate DNA.

The protein belongs to the RuvB family. Homohexamer. Forms an RuvA(8)-RuvB(12)-Holliday junction (HJ) complex. HJ DNA is sandwiched between 2 RuvA tetramers; dsDNA enters through RuvA and exits via RuvB. An RuvB hexamer assembles on each DNA strand where it exits the tetramer. Each RuvB hexamer is contacted by two RuvA subunits (via domain III) on 2 adjacent RuvB subunits; this complex drives branch migration. In the full resolvosome a probable DNA-RuvA(4)-RuvB(12)-RuvC(2) complex forms which resolves the HJ.

It localises to the cytoplasm. The catalysed reaction is ATP + H2O = ADP + phosphate + H(+). In terms of biological role, the RuvA-RuvB-RuvC complex processes Holliday junction (HJ) DNA during genetic recombination and DNA repair, while the RuvA-RuvB complex plays an important role in the rescue of blocked DNA replication forks via replication fork reversal (RFR). RuvA specifically binds to HJ cruciform DNA, conferring on it an open structure. The RuvB hexamer acts as an ATP-dependent pump, pulling dsDNA into and through the RuvAB complex. RuvB forms 2 homohexamers on either side of HJ DNA bound by 1 or 2 RuvA tetramers; 4 subunits per hexamer contact DNA at a time. Coordinated motions by a converter formed by DNA-disengaged RuvB subunits stimulates ATP hydrolysis and nucleotide exchange. Immobilization of the converter enables RuvB to convert the ATP-contained energy into a lever motion, pulling 2 nucleotides of DNA out of the RuvA tetramer per ATP hydrolyzed, thus driving DNA branch migration. The RuvB motors rotate together with the DNA substrate, which together with the progressing nucleotide cycle form the mechanistic basis for DNA recombination by continuous HJ branch migration. Branch migration allows RuvC to scan DNA until it finds its consensus sequence, where it cleaves and resolves cruciform DNA. This is Holliday junction branch migration complex subunit RuvB from Bacillus cytotoxicus (strain DSM 22905 / CIP 110041 / 391-98 / NVH 391-98).